Reading from the N-terminus, the 123-residue chain is Large ribosomal subunit protein uL14c (123 aa).

The protein belongs to the universal ribosomal protein uL14 family. In terms of assembly, part of the 50S ribosomal subunit.

The protein localises to the plastid. The protein resides in the chloroplast. Its function is as follows. Binds to 23S rRNA. This Oryza nivara (Indian wild rice) protein is Large ribosomal subunit protein uL14c.